Reading from the N-terminus, the 128-residue chain is Gene 39 protein (128 aa).

In Mycobacterium (Mycobacteriophage D29), this protein is Gene 39 protein (39).